The sequence spans 428 residues: FAD-dependent monooxygenase kojA (428 aa).

FAD-binding positions include 52–60 (RLHKGPHYP) and 328–329 (SV).

The protein belongs to the aromatic-ring hydroxylase family. Requires FAD as cofactor.

Probable FAD-dependent monooxygenase; part of the gene cluster that mediates the biosynthesis of 5-hydroxy-2-hydroxymethyl-1,4-pyrone, also know as kojic acid, a by-product in the fermentation process of malting rice that acts as a chelation agent. Glucose might be converted to kojic acid by a combination of dehydrogenase and dehydratase reactions involving kojA and probably additional enzymes. This chain is FAD-dependent monooxygenase kojA, found in Aspergillus flavus (strain ATCC 200026 / FGSC A1120 / IAM 13836 / NRRL 3357 / JCM 12722 / SRRC 167).